The following is a 291-amino-acid chain: Citrate lyase subunit beta (291 aa).

Substrate is bound by residues Arg66 and Glu129. Mg(2+)-binding residues include Glu129 and Asp156.

Belongs to the HpcH/HpaI aldolase family. Citrate lyase beta subunit subfamily. In terms of assembly, oligomer with a subunit composition of (alpha,beta,gamma)6. It depends on Mg(2+) as a cofactor.

The protein resides in the cytoplasm. The catalysed reaction is citrate = oxaloacetate + acetate. The enzyme catalyses (3S)-citryl-CoA = oxaloacetate + acetyl-CoA. In terms of biological role, represents a citryl-ACP lyase. The sequence is that of Citrate lyase subunit beta (citE) from Haemophilus influenzae (strain ATCC 51907 / DSM 11121 / KW20 / Rd).